We begin with the raw amino-acid sequence, 178 residues long: Orotate phosphoribosyltransferase (178 aa).

5-phospho-alpha-D-ribose 1-diphosphate is bound by residues arginine 92, lysine 93, lysine 96, and 118–126 (EDVTTTGGS). Orotate-binding residues include threonine 122 and arginine 150.

It belongs to the purine/pyrimidine phosphoribosyltransferase family. PyrE subfamily. As to quaternary structure, homodimer. Mg(2+) serves as cofactor.

The catalysed reaction is orotidine 5'-phosphate + diphosphate = orotate + 5-phospho-alpha-D-ribose 1-diphosphate. Its pathway is pyrimidine metabolism; UMP biosynthesis via de novo pathway; UMP from orotate: step 1/2. Functionally, catalyzes the transfer of a ribosyl phosphate group from 5-phosphoribose 1-diphosphate to orotate, leading to the formation of orotidine monophosphate (OMP). The chain is Orotate phosphoribosyltransferase from Methanosphaera stadtmanae (strain ATCC 43021 / DSM 3091 / JCM 11832 / MCB-3).